The sequence spans 151 residues: Deoxyuridine 5'-triphosphate nucleotidohydrolase (151 aa).

Substrate is bound by residues 70–72, Asn83, 87–89, and Met97; these read RSG and LID.

Belongs to the dUTPase family. Requires Mg(2+) as cofactor.

The catalysed reaction is dUTP + H2O = dUMP + diphosphate + H(+). It participates in pyrimidine metabolism; dUMP biosynthesis; dUMP from dCTP (dUTP route): step 2/2. Functionally, this enzyme is involved in nucleotide metabolism: it produces dUMP, the immediate precursor of thymidine nucleotides and it decreases the intracellular concentration of dUTP so that uracil cannot be incorporated into DNA. This Actinobacillus succinogenes (strain ATCC 55618 / DSM 22257 / CCUG 43843 / 130Z) protein is Deoxyuridine 5'-triphosphate nucleotidohydrolase.